The primary structure comprises 88 residues: Small ribosomal subunit protein uS17 (88 aa).

Belongs to the universal ribosomal protein uS17 family. Part of the 30S ribosomal subunit.

In terms of biological role, one of the primary rRNA binding proteins, it binds specifically to the 5'-end of 16S ribosomal RNA. This Prochlorococcus marinus subsp. pastoris (strain CCMP1986 / NIES-2087 / MED4) protein is Small ribosomal subunit protein uS17.